The primary structure comprises 172 residues: L-methionine sulfoximine/L-methionine sulfone acetyltransferase (172 aa).

An N-acetyltransferase domain is found at 3–166 (ASIRDAGVAD…DLTFMQLNLD (164 aa)). Residues 75–77 (RPF) and 85–87 (EHS) each bind substrate. Residues 88-90 (VYV), 96-101 (GKGLGV), and Asn-127 contribute to the acetyl-CoA site.

Homodimer.

The enzyme catalyses L-methionine sulfoximine + acetyl-CoA = N-acetyl-L-methionine sulfoximine + CoA + H(+). The catalysed reaction is L-methionine sulfone + acetyl-CoA = N-acetyl-L-methionine sulfone + CoA + H(+). In terms of biological role, plays a role in the resistance against the toxic effects of L-methionine sulfoximine (MSX), a rare amino acid, which inhibits glutamine synthetase (GlnA). Catalyzes the acetylation of L-methionine sulfoximine (MSX). The protein is L-methionine sulfoximine/L-methionine sulfone acetyltransferase of Pseudomonas aeruginosa (strain ATCC 15692 / DSM 22644 / CIP 104116 / JCM 14847 / LMG 12228 / 1C / PRS 101 / PAO1).